The chain runs to 690 residues: Protein-glucosylgalactosylhydroxylysine glucosidase (690 aa).

299-300 lines the substrate pocket; that stretch reads WD. Glu-429 serves as the catalytic Proton donor. Substrate is bound at residue 497–498; it reads KQ.

The protein belongs to the glycosyl hydrolase 65 family.

It catalyses the reaction (5R)-5-O-[alpha-D-glucosyl-(1-&gt;2)-beta-D-galactosyl]-5-hydroxy-L-lysyl-[collagen] + H2O = (5R)-5-O-(beta-D-galactosyl)-5-hydroxy-L-lysyl-[collagen] + D-glucose. Its function is as follows. Catalyzes the hydrolysis of glucose from the disaccharide unit linked to hydroxylysine residues of collagen and collagen-like proteins. The sequence is that of Protein-glucosylgalactosylhydroxylysine glucosidase from Mus musculus (Mouse).